The following is an 80-amino-acid chain: Regulatory protein HrpD6 (80 aa).

In terms of biological role, involved in the regulation of several genes of the hrp-hrc-hpa cluster, which encodes a type III secretion system (T3SS). Upregulates the expression of hpa2, hpa1 and hpaB and partially controls the expression of hrcC and hrcT. Controls the secretion of the T3SS TAL effector AvrXa27. Also regulates the expression of several HrpX-regulated protein (Xrp) genes. Has no influence on hrpG or hrpX expression. The sequence is that of Regulatory protein HrpD6 from Xanthomonas oryzae pv. oryzicola.